The sequence spans 345 residues: G-protein coupled receptor family C group 5 member D (345 aa).

The Extracellular segment spans residues 1–27; that stretch reads MYKDCIESTGDYFLLCDAEGPWGIILE. A helical transmembrane segment spans residues 28 to 48; it reads SLAILGIVVTILLLLAFLFLM. Residues 49 to 63 lie on the Cytoplasmic side of the membrane; it reads RKIQDCSQWNVLPTQ. Residues 64-84 form a helical membrane-spanning segment; it reads LLFLLSVLGLFGLAFAFIIEL. The Extracellular segment spans residues 85 to 93; it reads NQQTAPVRY. A helical membrane pass occupies residues 94–114; it reads FLFGVLFALCFSCLLAHASNL. The Cytoplasmic segment spans residues 115-123; that stretch reads VKLVRGCVS. Residues 124 to 144 traverse the membrane as a helical segment; sequence FSWTTILCIAIGCSLLQIIIA. At 145-167 the chain is on the extracellular side; the sequence is TEYVTLIMTRGMMFVNMTPCQLN. Residues 168–188 form a helical membrane-spanning segment; it reads VDFVVLLVYVLFLMALTFFVS. The Cytoplasmic segment spans residues 189-204; sequence KATFCGPCENWKQHGR. A helical membrane pass occupies residues 205–225; the sequence is LIFITVLFSIIIWVVWISMLL. Residues 226 to 239 lie on the Extracellular side of the membrane; that stretch reads RGNPQFQRQPQWDD. A helical transmembrane segment spans residues 240–260; it reads PVVCIALVTNAWVFLLLYIVP. Residues 261-345 lie on the Cytoplasmic side of the membrane; it reads ELCILYRSCR…LSPQQDAGGV (85 aa).

This sequence belongs to the G-protein coupled receptor 3 family. Homodimer. Widely expressed in the peripheral system. Expression pattern is high in pancreas, medium in kidney, small intestine, spleen and testis, low in lung, colon, leukocyte, prostate and thymus and not detectable in brain, heart, liver, placenta, skeletal muscle and ovary.

The protein localises to the cell membrane. G-protein coupled receptor involved in hard keratin expression and likely plays a role in the development of hair and nails. The sequence is that of G-protein coupled receptor family C group 5 member D (GPRC5D) from Homo sapiens (Human).